The sequence spans 544 residues: Probable protein kinase UbiB (544 aa).

In terms of domain architecture, Protein kinase spans 123 to 501 (DFDIKPLASA…KRQQGTGKFL (379 aa)). ATP is bound by residues 129 to 137 (LASASIAQV) and lysine 152. The Proton acceptor role is filled by aspartate 287. The next 2 membrane-spanning stretches (helical) occupy residues 496 to 516 (GTGK…AIWI) and 519 to 539 (QLEP…LLSW).

The protein belongs to the ABC1 family. UbiB subfamily.

It localises to the cell inner membrane. The protein operates within cofactor biosynthesis; ubiquinone biosynthesis [regulation]. In terms of biological role, is probably a protein kinase regulator of UbiI activity which is involved in aerobic coenzyme Q (ubiquinone) biosynthesis. The protein is Probable protein kinase UbiB of Vibrio cholerae serotype O1 (strain ATCC 39315 / El Tor Inaba N16961).